The primary structure comprises 459 residues: Mitochondrial distribution and morphology protein 10 (459 aa).

Belongs to the MDM10 family. In terms of assembly, component of the ER-mitochondria encounter structure (ERMES) or MDM complex, composed of MMM1, MDM10, MDM12 and MDM34. Associates with the mitochondrial outer membrane sorting assembly machinery SAM(core) complex.

The protein localises to the mitochondrion outer membrane. Component of the ERMES/MDM complex, which serves as a molecular tether to connect the endoplasmic reticulum and mitochondria. Components of this complex are involved in the control of mitochondrial shape and protein biogenesis and may function in phospholipid exchange. MDM10 is involved in the late assembly steps of the general translocase of the mitochondrial outer membrane (TOM complex). Functions in the TOM40-specific route of the assembly of outer membrane beta-barrel proteins, including the association of TOM40 with the receptor TOM22 and small TOM proteins. Can associate with the SAM(core) complex as well as the MDM12-MMM1 complex, both involved in late steps of the major beta-barrel assembly pathway, that is responsible for biogenesis of all outer membrane beta-barrel proteins. May act as a switch that shuttles between both complexes and channels precursor proteins into the TOM40-specific pathway. Plays a role in mitochondrial morphology and in the inheritance of mitochondria. This chain is Mitochondrial distribution and morphology protein 10, found in Clavispora lusitaniae (strain ATCC 42720) (Yeast).